The chain runs to 372 residues: Glutamate 5-kinase (372 aa).

Lysine 14 provides a ligand contact to ATP. Residues serine 54, aspartate 141, and asparagine 153 each coordinate substrate. 173–174 contacts ATP; that stretch reads TD. One can recognise a PUA domain in the interval 280-358; that stretch reads RGHVVIDAGA…GEIETVLGYM (79 aa).

Belongs to the glutamate 5-kinase family.

It is found in the cytoplasm. It carries out the reaction L-glutamate + ATP = L-glutamyl 5-phosphate + ADP. It functions in the pathway amino-acid biosynthesis; L-proline biosynthesis; L-glutamate 5-semialdehyde from L-glutamate: step 1/2. Its function is as follows. Catalyzes the transfer of a phosphate group to glutamate to form L-glutamate 5-phosphate. The polypeptide is Glutamate 5-kinase (Burkholderia vietnamiensis (strain G4 / LMG 22486) (Burkholderia cepacia (strain R1808))).